Reading from the N-terminus, the 65-residue chain is Large ribosomal subunit protein bL35 (65 aa).

The span at 1–16 (MPKQKTHRASAKRFKR) shows a compositional bias: basic residues. The interval 1 to 20 (MPKQKTHRASAKRFKRTGSG) is disordered.

This sequence belongs to the bacterial ribosomal protein bL35 family.

This chain is Large ribosomal subunit protein bL35, found in Streptococcus equi subsp. equi (strain 4047).